The chain runs to 298 residues: MGVTGILQLPRDRFKRTSFFLWVIILFQRTFSIPLGVIHNSTLQVSDVDKLVCRDKLSSTNQLRSVGLNLEGNGVATDVPSATKRWGFRSGVPPKVVNYEAGEWAENCYNLEIKKPDGSECLPAAPDGIRGFPRCRYVHKVSGTGPCAGDFAFHKEGAFFLYDRLASTVIYRGTTFAEGVVAFLILPQAKKDFFSSHPLREPVNATEDPSSGYYSTTIRYQATGFGTNETEYLFEVDNLTYVQLESRFTPQFLLQLNETIYTSGKRSNTTGKLIWKVNPEIDTTIGEWAFWETKKKPH.

The N-terminal stretch at 1–32 (MGVTGILQLPRDRFKRTSFFLWVIILFQRTFS) is a signal peptide. An N-linked (GlcNAc...) asparagine; by host glycan is attached at asparagine 40. 2 disulfide bridges follow: cysteine 108–cysteine 135 and cysteine 121–cysteine 147. N-linked (GlcNAc...) asparagine; by host glycans are attached at residues asparagine 204, asparagine 228, asparagine 238, asparagine 257, and asparagine 268.

The protein belongs to the filoviruses glycoprotein family.

The protein resides in the secreted. The chain is Super small secreted glycoprotein (GP) from Epomops franqueti (Franquet's epauletted fruit bat).